A 471-amino-acid chain; its full sequence is Heat shock 70 kDa protein 13 (471 aa).

The signal sequence occupies residues 1–22 (MAREMTILGSAVLTLLLAGYLA). The tract at residues 314–352 (EEQDRKEPHSSDTELPKDKLSSADDHRVNSGFGRGLSDK) is disordered. The span at 315 to 341 (EQDRKEPHSSDTELPKDKLSSADDHRV) shows a compositional bias: basic and acidic residues.

Belongs to the heat shock protein 70 family. In terms of assembly, binds UBQLN2.

The protein localises to the microsome. It is found in the endoplasmic reticulum. Functionally, has peptide-independent ATPase activity. The sequence is that of Heat shock 70 kDa protein 13 (HSPA13) from Pongo abelii (Sumatran orangutan).